Here is a 133-residue protein sequence, read N- to C-terminus: Ribosome-binding factor A (133 aa).

This sequence belongs to the RbfA family. Monomer. Binds 30S ribosomal subunits, but not 50S ribosomal subunits or 70S ribosomes.

It is found in the cytoplasm. In terms of biological role, one of several proteins that assist in the late maturation steps of the functional core of the 30S ribosomal subunit. Associates with free 30S ribosomal subunits (but not with 30S subunits that are part of 70S ribosomes or polysomes). Required for efficient processing of 16S rRNA. May interact with the 5'-terminal helix region of 16S rRNA. The polypeptide is Ribosome-binding factor A (Klebsiella pneumoniae (strain 342)).